Here is a 310-residue protein sequence, read N- to C-terminus: Porphobilinogen deaminase (310 aa).

An S-(dipyrrolylmethanemethyl)cysteine modification is found at C242.

The protein belongs to the HMBS family. In terms of assembly, monomer. Dipyrromethane serves as cofactor.

It carries out the reaction 4 porphobilinogen + H2O = hydroxymethylbilane + 4 NH4(+). It functions in the pathway porphyrin-containing compound metabolism; protoporphyrin-IX biosynthesis; coproporphyrinogen-III from 5-aminolevulinate: step 2/4. Tetrapolymerization of the monopyrrole PBG into the hydroxymethylbilane pre-uroporphyrinogen in several discrete steps. The chain is Porphobilinogen deaminase from Shewanella sp. (strain ANA-3).